We begin with the raw amino-acid sequence, 132 residues long: Myelin P2 protein (132 aa).

S2 carries the post-translational modification N-acetylserine. Residues R107 and 127-129 (RIY) each bind (9Z)-octadecenoate. Residues R107 and 127 to 129 (RIY) each bind hexadecanoate.

Belongs to the calycin superfamily. Fatty-acid binding protein (FABP) family. As to quaternary structure, monomer.

The protein localises to the cytoplasm. May play a role in lipid transport protein in Schwann cells. May bind cholesterol. The sequence is that of Myelin P2 protein (PMP2) from Oryctolagus cuniculus (Rabbit).